The primary structure comprises 558 residues: REST corepressor spr-1 (558 aa).

Residues 1 to 106 are disordered; it reads MDLYDDDGES…KVKGPLSNTN (106 aa). A compositionally biased stretch (acidic residues) spans 36–56; the sequence is TIEENVPEVEENTLLEEDSLV. A compositionally biased stretch (basic residues) spans 69 to 80; the sequence is KPSKSKRKRKRS. In terms of domain architecture, ELM2 spans 107–192; that stretch reads KEINVGTEFQ…SAIAEVARRN (86 aa). One can recognise an SANT 1 domain in the interval 193–244; sequence ELKDVWTDQEITLFENCYQIFGKNFSQIRSALCHRSLQSIVQFYYESKKRVK. Residues 271–325 form a GATA-type zinc finger; sequence AIFESMCDNCGEKAENMQINNAMNRPECRACLIYFNQTGVPRPTSLRLVLAERIR. The segment covering 378 to 402 has biased composition (polar residues); sequence CTENGNVGETSSPSAQKTEIQSESD. Residues 378–406 form a disordered region; that stretch reads CTENGNVGETSSPSAQKTEIQSESDGSGP. One can recognise an SANT 2 domain in the interval 481 to 532; it reads HYSQDWTQLERSQVIRCFNMYGAHFEHIADVIGTKTPDQVYQFYLENQKAID.

This sequence belongs to the CoREST family. As to quaternary structure, probably part of a large repressor complex. Interacts with histone demethylase spr-5/lsd-1.

The protein localises to the nucleus. Probable corepressor protein, which probably participates in the transcriptional repression of the presenilin protein hop-1. Probably acts via the formation of a multiprotein complex that deacetylates and demethylates specific sites on histones. Acts redundantly with the transcriptional repressor lin-35 to play a role in vulval morphogenesis and promote germline proliferation. The chain is REST corepressor spr-1 from Caenorhabditis elegans.